A 303-amino-acid polypeptide reads, in one-letter code: Protein bottleneck (303 aa).

Disordered regions lie at residues 102–142 and 185–272; these read SKRN…PTVT and VATT…ASVR. Low complexity-rich tracts occupy residues 115–138 and 185–197; these read RQQEQRQPQEQPLQQEELQHQQQE and VATTTANSSTANS. Positions 260–272 are enriched in polar residues; it reads ATISRQSSSASVR.

Restricted to the blastoderm.

It localises to the cytoplasm. Its subcellular location is the cytoskeleton. Its function is as follows. Acts as a regulator of the microfilament network governing cellularization of the embryo. Determines the timing of a key conformational transition in the cortical microfilament network: the proper coordination of membrane invagination and basal closure of the cells. To do this, bnk possibly physically links neighboring contractile units of the early cycle 14 microfilament network in a manner that prevents basal constriction until the proper stage has been reached. Bnk together with nullo and Sry-alpha may provide auxiliary functions, by acting both to stabilize a large and dynamic microfilament structure and regulate its functions. This is Protein bottleneck (bnk) from Drosophila melanogaster (Fruit fly).